Consider the following 330-residue polypeptide: Diacylglycerol acyltransferase/mycolyltransferase Ag85B (330 aa).

The first 40 residues, 1 to 40 (MTDLSEKVRAWGRRLVVGAAAAATLPGLIGIAGGAATANA), serve as a signal peptide directing secretion. Residue 82 to 83 (LR) coordinates substrate. Residues 98–108 (FEWYYQSGLSV) are fibronectin-binding. Cys127 and Cys132 are joined by a disulfide. Substrate is bound by residues Ser166 and Asp194. The active-site Nucleophile is Ser166. The active site involves Glu270. Residues 272–275 (FVRS), Lys279, and 302–304 (HSW) each bind substrate. The active site involves His302.

The protein belongs to the mycobacterial A85 antigen family.

It localises to the secreted. The enzyme catalyses 2 alpha,alpha'-trehalose 6-mycolate = alpha,alpha'-trehalose 6,6'-bismycolate + alpha,alpha-trehalose. It catalyses the reaction an acyl-CoA + a 1,2-diacyl-sn-glycerol = a triacyl-sn-glycerol + CoA. The antigen 85 proteins (FbpA, FbpB, FbpC) are responsible for the high affinity of mycobacteria for fibronectin, a large adhesive glycoprotein, which facilitates the attachment of M.tuberculosis to murine alveolar macrophages (AMs). They also help to maintain the integrity of the cell wall by catalyzing the transfer of mycolic acids to cell wall arabinogalactan and through the synthesis of alpha,alpha-trehalose dimycolate (TDM, cord factor). They catalyze the transfer of a mycoloyl residue from one molecule of alpha,alpha-trehalose monomycolate (TMM) to another TMM, leading to the formation of TDM. The chain is Diacylglycerol acyltransferase/mycolyltransferase Ag85B (fbpB) from Mycobacterium intracellulare (strain ATCC 13950 / DSM 43223 / JCM 6384 / NCTC 13025 / 3600).